Reading from the N-terminus, the 336-residue chain is tRNA N6-adenosine threonylcarbamoyltransferase (336 aa).

2 residues coordinate Fe cation: H114 and H118. Residues 136–140 (LVSGG), D169, G182, D186, and N275 each bind substrate. D301 serves as a coordination point for Fe cation.

This sequence belongs to the KAE1 / TsaD family. Fe(2+) is required as a cofactor.

Its subcellular location is the cytoplasm. The enzyme catalyses L-threonylcarbamoyladenylate + adenosine(37) in tRNA = N(6)-L-threonylcarbamoyladenosine(37) in tRNA + AMP + H(+). Its function is as follows. Required for the formation of a threonylcarbamoyl group on adenosine at position 37 (t(6)A37) in tRNAs that read codons beginning with adenine. Is involved in the transfer of the threonylcarbamoyl moiety of threonylcarbamoyl-AMP (TC-AMP) to the N6 group of A37, together with TsaE and TsaB. TsaD likely plays a direct catalytic role in this reaction. This Streptococcus pneumoniae (strain JJA) protein is tRNA N6-adenosine threonylcarbamoyltransferase.